Reading from the N-terminus, the 186-residue chain is Ribosome-recycling factor (186 aa).

Belongs to the RRF family.

It localises to the cytoplasm. In terms of biological role, responsible for the release of ribosomes from messenger RNA at the termination of protein biosynthesis. May increase the efficiency of translation by recycling ribosomes from one round of translation to another. In Cupriavidus necator (strain ATCC 17699 / DSM 428 / KCTC 22496 / NCIMB 10442 / H16 / Stanier 337) (Ralstonia eutropha), this protein is Ribosome-recycling factor.